We begin with the raw amino-acid sequence, 127 residues long: Small ribosomal subunit protein uS11 (127 aa).

Belongs to the universal ribosomal protein uS11 family. In terms of assembly, part of the 30S ribosomal subunit. Interacts with proteins S7 and S18. Binds to IF-3.

Functionally, located on the platform of the 30S subunit, it bridges several disparate RNA helices of the 16S rRNA. Forms part of the Shine-Dalgarno cleft in the 70S ribosome. This chain is Small ribosomal subunit protein uS11, found in Streptococcus agalactiae serotype Ia (strain ATCC 27591 / A909 / CDC SS700).